The following is a 460-amino-acid chain: DNA repair protein RadA (460 aa).

The C4-type zinc-finger motif lies at 11–28 (CNECGADYPRWQGQCSAC). 102–109 (GNPGAGKS) is an ATP binding site. Residues 258-262 (KNRFG) carry the RadA KNRFG motif motif. The lon-protease-like stretch occupies residues 357-460 (DVFVNVVGGV…SDALSVFDDL (104 aa)).

This sequence belongs to the RecA family. RadA subfamily.

Its function is as follows. DNA-dependent ATPase involved in processing of recombination intermediates, plays a role in repairing DNA breaks. Stimulates the branch migration of RecA-mediated strand transfer reactions, allowing the 3' invading strand to extend heteroduplex DNA faster. Binds ssDNA in the presence of ADP but not other nucleotides, has ATPase activity that is stimulated by ssDNA and various branched DNA structures, but inhibited by SSB. Does not have RecA's homology-searching function. Genetic experiments involving combination of radA mutations with mutations in recA, recB, recG, recJ, recQ, ruvA and ruvC show it plays a role in recombination and recombinational repair, probably involving stabilizing or processing branched DNA or blocked replication forks. Is genetically synergistic to RecG and RuvABC. May be involved in recovery of genetic rearrangements during replication fork breakdown. In combination with RadD is important in recovery from double-strand DNA breaks (DSB). The chain is DNA repair protein RadA from Escherichia coli (strain K12).